A 502-amino-acid polypeptide reads, in one-letter code: MSLNKKLALIIIDGLGIGKKDDTNAVYLANPKTLNYLIKNYPTLEISAAQQPIGLLENQAGNSEIGHLTIGAGRIILNDNANINSYTKRLDYESLVLNDINNEIVHVVGMYSNGLVHSNYEHIHWIIKELVKNNNQVVLHLISDGRDDYPYGFAQFIEQINALKTQYNVIIKSLSGRYFAMDRDQRWERTQKAFNTMFIKQDKICEQSLLEVAQSIANHYESDEFVEPIVFNNDEKYNLKPYQKVILTNYRSDRMRQLAHLLKPNRKFNYHNPFLIKDIHLITLVPFPDVDAITLFEKQNLNNTLGDVLNDHHIKQARVAETEKYGHISFFFDGGINKHYASKTQYLIPSQKVATYDLCPQMSASLITKTIIDHYFDHDVFIVNYANPDMVGHSGNMKQTIQAILSVDSEIQKLYDFFKKNNGVLMITGDHGNAETMIDANGQIITSHSINDVWFIITDNNIVFDQTQKFSLANIAPTILEYLNIKKPIEMAASSMIKKIHK.

Positions 13 and 63 each coordinate Mn(2+). The Phosphoserine intermediate role is filled by Ser-63. Residues His-117, 146–147 (RD), Arg-177, Arg-183, 251–254 (RSDR), and Lys-324 contribute to the substrate site. Asp-389, His-393, Asp-430, His-431, and His-448 together coordinate Mn(2+).

It belongs to the BPG-independent phosphoglycerate mutase family. Monomer. It depends on Mn(2+) as a cofactor.

The enzyme catalyses (2R)-2-phosphoglycerate = (2R)-3-phosphoglycerate. Its pathway is carbohydrate degradation; glycolysis; pyruvate from D-glyceraldehyde 3-phosphate: step 3/5. Catalyzes the interconversion of 2-phosphoglycerate and 3-phosphoglycerate. This Ureaplasma urealyticum serovar 10 (strain ATCC 33699 / Western) protein is 2,3-bisphosphoglycerate-independent phosphoglycerate mutase.